The sequence spans 253 residues: uncharacterized protein (253 aa).

This is an uncharacterized protein from Mycoplasma pneumoniae (strain ATCC 29342 / M129 / Subtype 1) (Mycoplasmoides pneumoniae).